The primary structure comprises 134 residues: Ribosome-binding factor A (134 aa).

Belongs to the RbfA family. In terms of assembly, monomer. Binds 30S ribosomal subunits, but not 50S ribosomal subunits or 70S ribosomes.

It is found in the cytoplasm. One of several proteins that assist in the late maturation steps of the functional core of the 30S ribosomal subunit. Associates with free 30S ribosomal subunits (but not with 30S subunits that are part of 70S ribosomes or polysomes). Required for efficient processing of 16S rRNA. May interact with the 5'-terminal helix region of 16S rRNA. The polypeptide is Ribosome-binding factor A (Rhizobium johnstonii (strain DSM 114642 / LMG 32736 / 3841) (Rhizobium leguminosarum bv. viciae)).